The following is a 360-amino-acid chain: MKATIIFLLLAQVSWAGPFQQRGLFDFMLEDEASGIGPEDRAPDMPDLELLGPVCPFRCQCHLRVVQCSDLGLDKVPKDLPPDTTLLDLQNNKITEIKDGDFKNLKNLHTLILVNNKISKISPGAFTPLLKLERLYLSKNHLKELPEKMPKTLQELRAHENEITKVRKAVFNGLNQMIVVELGTNPLKSSGIENGAFQGMKKLSYIRIADTNITTIPQGLPPSLTELHLEGNKITKVDASSLKGLNNLAKLGLSFNSISAVDNGTLANTPHLRELHLDNNKLIRVPGGLAEHKYIQVVYLHNNNISAVGSNDFCPPGYNTKKASYSGVSLFSNPVQYWEIQPSTFRCVYVRSAIQLGNYK.

The first 16 residues, 1 to 16, serve as a signal peptide directing secretion; that stretch reads MKATIIFLLLAQVSWA. A propeptide spanning residues 17 to 30 is cleaved from the precursor; it reads GPFQQRGLFDFMLE. The O-linked (Xyl...) (glycosaminoglycan) serine glycan is linked to Ser-34. 2 disulfides stabilise this stretch: Cys-55/Cys-61 and Cys-59/Cys-68. LRR repeat units lie at residues 74 to 94, 95 to 118, 119 to 142, 143 to 163, 164 to 187, 188 to 213, 214 to 234, 235 to 258, 259 to 282, 283 to 305, 306 to 335, and 336 to 360; these read DKVPKDLPPDTTLLDLQNNKI, TEIKDGDFKNLKNLHTLILVNNKI, SKISPGAFTPLLKLERLYLSKNHL, KELPEKMPKTLQELRAHENEI, TKVRKAVFNGLNQMIVVELGTNPL, KSSGIENGAFQGMKKLSYIRIADTNI, TTIPQGLPPSLTELHLEGNKI, TKVDASSLKGLNNLAKLGLSFNSI, SAVDNGTLANTPHLRELHLDNNKL, IRVPGGLAEHKYIQVVYLHNNNI, SAVGSNDFCPPGYNTKKASYSGVSLFSNPV, and QYWEIQPSTFRCVYVRSAIQLGNYK. N-linked (GlcNAc...) asparagine glycosylation occurs at Asn-212. Residues Asn-263 and Asn-304 are each glycosylated (N-linked (GlcNAc...) asparagine). Cys-314 and Cys-347 form a disulfide bridge.

The protein belongs to the small leucine-rich proteoglycan (SLRP) family. SLRP class I subfamily. In terms of assembly, binds to type I and type II collagen, fibronectin and TGF-beta. Forms a ternary complex with MFAP2 and ELN. Interacts with DPT. In terms of processing, the attached glycosaminoglycan chain can be either chondroitin sulfate or dermatan sulfate depending upon the tissue of origin.

Its subcellular location is the secreted. The protein localises to the extracellular space. The protein resides in the extracellular matrix. Functionally, may affect the rate of fibrils formation. The polypeptide is Decorin (DCN) (Canis lupus familiaris (Dog)).